Consider the following 441-residue polypeptide: Transcriptional regulatory protein ZraR (441 aa).

The 115-residue stretch at 7–121 (DILVVDDDVS…RLQETLEKAL (115 aa)) folds into the Response regulatory domain. 4-aspartylphosphate is present on Asp56. A Sigma-54 factor interaction domain is found at 141–370 (MIGSSPAMQH…LENAIERAVV (230 aa)). ATP contacts are provided by Gly172, Thr173, Arg329, and Arg359. The H-T-H motif DNA-binding region spans 421 to 440 (KTEAARQLGITRKTLLAKLS).

As to quaternary structure, forms homohexamers in the crystal structure. However, the dimerization interface between DNA-binding domains observed in the crystal structure suggests that dodecamers, rather than hexamers, might be the functionally important oligomer. In terms of processing, phosphorylated by ZraS.

Its subcellular location is the cytoplasm. Activity of the ZraS/ZraR two-component system is repressed by the zinc-bound form of ZraP, which probably interacts with the periplasmic region of ZraS. Its function is as follows. Part of the Zra signaling pathway, an envelope stress response (ESR) system composed of the periplasmic accessory protein ZraP, the histidine kinase ZraS and the transcriptional regulator ZraR. The ZraPSR system contributes to antibiotic resistance and is important for membrane integrity in the presence of membrane-targeting biocides. ZraR is a member of the two-component regulatory system ZraS/ZraR. When activated by ZraS, acts in conjunction with sigma-54 to regulate the expression of zraP in the presence of high Zn(2+) or Pb(2+) concentrations. Also positively autoregulates the expression of the zraSR operon. This is Transcriptional regulatory protein ZraR from Salmonella typhimurium (strain LT2 / SGSC1412 / ATCC 700720).